The sequence spans 283 residues: N-terminal Xaa-Pro-Lys N-methyltransferase 2 (283 aa).

S-adenosyl-L-methionine-binding positions include G124, R129, D146, 174-175 (LQ), Q190, and H195.

It belongs to the methyltransferase superfamily. NTM1 family.

Its subcellular location is the nucleus. It carries out the reaction N-terminal L-alanyl-L-prolyl-L-lysyl-[protein] + S-adenosyl-L-methionine = N-terminal N-methyl-L-alanyl-L-prolyl-L-lysyl-[protein] + S-adenosyl-L-homocysteine + H(+). The catalysed reaction is N-terminal L-prolyl-L-prolyl-L-lysyl-[protein] + S-adenosyl-L-methionine = N-terminal N-methyl-L-prolyl-L-prolyl-L-lysyl-[protein] + S-adenosyl-L-homocysteine + H(+). The enzyme catalyses N-terminal L-seryl-L-prolyl-L-lysyl-[protein] + S-adenosyl-L-methionine = N-terminal N-methyl-L-seryl-L-prolyl-L-lysyl-[protein] + S-adenosyl-L-homocysteine + H(+). Functionally, alpha N-methyltransferase that methylates the N-terminus of target proteins containing the N-terminal motif [Ala/Pro/Ser]-Pro-Lys when the initiator Met is cleaved. Specifically catalyzes monomethylation of exposed alpha-amino group of Ala or Ser residue in the [Ala/Ser]-Pro-Lys motif and Pro in the Pro-Pro-Lys motif. Predominantly functions as a mono-methyltransferase but is also able to di-/tri-methylate the GPKRIA peptide and di-methylate the PPKRIA peptide (in vitro). May activate NTMT1 by priming its substrates for trimethylation. This Homo sapiens (Human) protein is N-terminal Xaa-Pro-Lys N-methyltransferase 2.